The sequence spans 76 residues: Glutathione S-transferase (76 aa).

The region spanning 1 to 40 (XVAFETVPVDLMKGEHKQPAYLALQPFGTVPAVVDGDYXL) is the GST N-terminal domain. In terms of domain architecture, GST C-terminal spans 41 to 76 (LSAVLDVYEAHLHGYLAGDFVSLADLAHLPFTDYLV).

The protein belongs to the GST superfamily. Theta family.

The protein localises to the cytoplasm. It carries out the reaction RX + glutathione = an S-substituted glutathione + a halide anion + H(+). In terms of biological role, conjugation of reduced glutathione to a wide number of exogenous and endogenous hydrophobic electrophiles. The chain is Glutathione S-transferase from Brassica oleracea var. italica (Broccoli).